A 450-amino-acid chain; its full sequence is Keratin, type I cytoskeletal 25 (450 aa).

The span at 1–23 (MSLRLSSASRRSCPRPTTGSLRL) shows a compositional bias: low complexity. Positions 1 to 26 (MSLRLSSASRRSCPRPTTGSLRLSGG) are disordered. The segment at 1–78 (MSLRLSSASR…VNERGLLSGN (78 aa)) is head. The coil 1A stretch occupies residues 79-114 (EKVTMQNLNDRLASYLDSVHALEEANADLEQKIKGW). The IF rod domain maps to 79–394 (EKVTMQNLND…LLIGGDDGAC (316 aa)). The segment at 115-136 (YEKFGPGSCRGLDHDYSRYFPI) is linker 1. Residues 137–228 (IDDLKNQIIA…KNHKEEMQVL (92 aa)) form a coil 1B region. The linker 12 stretch occupies residues 229–251 (QCAAGGNVNVEMNAAPGVDLTVL). The interval 252–390 (LNNMRAEYEA…ETYCLLIGGD (139 aa)) is coil 2. The tail stretch occupies residues 391-450 (DGACKSGGYKSKDYGSGNVGSQVKDSAKAIVVKKVLEEVDQRSKILTTRLRSLEEKSQSN). Residue serine 442 is modified to Phosphoserine.

Belongs to the intermediate filament family. In terms of assembly, heterodimer of a type I and a type II keratin. Heterodimer with type II keratin KRT5 leading to the formation of keratin intermediate filament (KIF) network. Interacts with KRT6A to form filaments.

It is found in the cytoplasm. Essential for the proper assembly of type I and type II keratin protein complexes and formation of keratin intermediate filaments in the inner root sheath (irs). Plays a role in the cytoskeleton organization. The protein is Keratin, type I cytoskeletal 25 (KRT25) of Pan troglodytes (Chimpanzee).